We begin with the raw amino-acid sequence, 125 residues long: Large ribosomal subunit protein bL12 (125 aa).

This sequence belongs to the bacterial ribosomal protein bL12 family. Homodimer. Part of the ribosomal stalk of the 50S ribosomal subunit. Forms a multimeric L10(L12)X complex, where L10 forms an elongated spine to which 2 to 4 L12 dimers bind in a sequential fashion. Binds GTP-bound translation factors.

Its function is as follows. Forms part of the ribosomal stalk which helps the ribosome interact with GTP-bound translation factors. Is thus essential for accurate translation. The sequence is that of Large ribosomal subunit protein bL12 from Rhizobium leguminosarum bv. trifolii (strain WSM2304).